A 435-amino-acid chain; its full sequence is Cytokine-dependent hematopoietic cell linker (435 aa).

A phosphotyrosine; by LYN mark is found at Tyr-69 and Tyr-96. Positions 155–303 (KINKTPLPPP…PDPTKPDEKD (149 aa)) are disordered. The interval 160–165 (PLPPPR) is mediates interaction with PLCG1; essential for BCR signaling; involved in restoration of BCR-induced calcium response and ERK2 and JNK2 activation in BLNK-deficient cells expressing LAT. The mediates interaction with LAT, GRB2, and FGR; involved in translocation to the glycolipid-enriched microdomain and restoration of BCR-induced calcium response in BLNK-deficient DT40 cells expressing LAT stretch occupies residues 178 to 182 (PPAPP). Residues 226–249 (PESSCPSSNQNTQKSPPAIASSSY) show a composition bias toward polar residues. Residues 290–303 (NSEKPDPTKPDEKD) are compositionally biased toward basic and acidic residues. Residues 309-418 (WYIGEYSRQA…RKQCYLTQPL (110 aa)) form the SH2 domain.

In terms of assembly, when phosphorylated, interacts with PLCG1, PLCG2, GRB2, VAV and LAT. Associated with a tyrosine-phosphorylated polypeptide (p92) in response to immunoreceptor stimulation. Interacts with LBR and AGO2. Interacts with FGR. Part of a complex consisting of CLNK, SKAP1 and FYB1. Interacts (via SH2 domain) with FYB1; this interaction allows SKAP1 and FYB1 to promote tyrosine phosphorylation of CLNK by LYN. Interacts (via SH2 domain) with MAP4K1. Post-translationally, tyrosine-phosphorylated upon BCR cross-linking. Tyrosine phosphorylation at both Tyr-69 and Tyr-96 are required for BCR-induced calcium response and are essential to restore PLCG2-mediated signaling in BLNK-deficient DT40 cells, but this phosphorylation is dispensable in cells expressing LAT. Interacts with the SH2 domain of PLCG1 via phosphorylated Tyr-96. Tyrosine phosphorylation is increased when complexed with SKAP1 and FYB1. In terms of tissue distribution, expressed in T-cells, mast cells, natural killer and natural killer T cells (at protein level). Expressed in cytokine-stimulated hemopoietic cells.

The protein resides in the cytoplasm. In terms of biological role, an adapter protein which plays a role in the regulation of immunoreceptor signaling, including PLC-gamma-mediated B-cell antigen receptor (BCR) signaling and FC-epsilon R1-mediated mast cell degranulation. Together with FGR, it acts as a negative regulator of natural killer cell-activating receptors and inhibits interferon-gamma production. Acts as a positive regulator of both T-cell receptor and natural killer T (NKT) cell receptor signaling in CD4-positive NKT cells. Together with MAP4K1, it enhances CD3-triggered activation of T-cells and subsequent IL2 production. May be involved in tumor necrosis factor induced cell death by promoting reactive oxidative species generation, and MLKL oligomerization, ultimately leading to necrosis. Involved in phosphorylation of LAT. May be involved in high affinity immunoglobulin epsilon receptor signaling in mast cells. This chain is Cytokine-dependent hematopoietic cell linker (Clnk), found in Mus musculus (Mouse).